The chain runs to 130 residues: Small ribosomal subunit protein uS9 (130 aa).

The segment at 105–130 (TRDSRMVERKKPGLKKARRASQFSKR) is disordered. Residues 106 to 115 (RDSRMVERKK) are compositionally biased toward basic and acidic residues. The segment covering 116-130 (PGLKKARRASQFSKR) has biased composition (basic residues).

Belongs to the universal ribosomal protein uS9 family.

The polypeptide is Small ribosomal subunit protein uS9 (Oenococcus oeni (strain ATCC BAA-331 / PSU-1)).